The chain runs to 337 residues: Large ribosomal subunit protein uL3 (337 aa).

The protein belongs to the universal ribosomal protein uL3 family. In terms of assembly, part of the 50S ribosomal subunit. Forms a cluster with proteins L14 and L24e.

Functionally, one of the primary rRNA binding proteins, it binds directly near the 3'-end of the 23S rRNA, where it nucleates assembly of the 50S subunit. The polypeptide is Large ribosomal subunit protein uL3 (Methanosphaerula palustris (strain ATCC BAA-1556 / DSM 19958 / E1-9c)).